The sequence spans 348 residues: Heat-inducible transcription repressor HrcA (348 aa).

This sequence belongs to the HrcA family.

Negative regulator of class I heat shock genes (grpE-dnaK-dnaJ and groELS operons). Prevents heat-shock induction of these operons. In Thermodesulfovibrio yellowstonii (strain ATCC 51303 / DSM 11347 / YP87), this protein is Heat-inducible transcription repressor HrcA.